Here is a 102-residue protein sequence, read N- to C-terminus: Large ribosomal subunit protein uL24 (102 aa).

Belongs to the universal ribosomal protein uL24 family. As to quaternary structure, part of the 50S ribosomal subunit.

In terms of biological role, one of two assembly initiator proteins, it binds directly to the 5'-end of the 23S rRNA, where it nucleates assembly of the 50S subunit. Functionally, one of the proteins that surrounds the polypeptide exit tunnel on the outside of the subunit. This is Large ribosomal subunit protein uL24 from Polynucleobacter asymbioticus (strain DSM 18221 / CIP 109841 / QLW-P1DMWA-1) (Polynucleobacter necessarius subsp. asymbioticus).